The sequence spans 499 residues: Phenylalanine--tRNA ligase alpha subunit (499 aa).

Residues Thr342, 381–383 (QID), and Phe422 contribute to the L-phenylalanine site. Glu424 lines the Mg(2+) pocket. Phe447 is a binding site for L-phenylalanine.

This sequence belongs to the class-II aminoacyl-tRNA synthetase family. Phe-tRNA synthetase alpha subunit type 2 subfamily. As to quaternary structure, tetramer of two alpha and two beta subunits. Requires Mg(2+) as cofactor.

It is found in the cytoplasm. It catalyses the reaction tRNA(Phe) + L-phenylalanine + ATP = L-phenylalanyl-tRNA(Phe) + AMP + diphosphate + H(+). The protein is Phenylalanine--tRNA ligase alpha subunit of Thermococcus gammatolerans (strain DSM 15229 / JCM 11827 / EJ3).